Consider the following 855-residue polypeptide: Cytosolic phospholipase A2 zeta (855 aa).

Positions 27–145 constitute a C2 domain; it reads EKSEPQWKHR…QLGQPCTKNF (119 aa). The Ca(2+) site is built by D60, D66, D116, D118, and D123. The region spanning 304-855 is the PLA2c domain; that stretch reads MSSSGDLDLR…RRQAGGRVGG (552 aa). The active-site Nucleophile is the S393. D685 serves as the catalytic Proton acceptor.

The cofactor is Ca(2+). As to expression, strongly expressed in thyroid, expressed at intermediate level in stomach and at very low level in large intestine and prostate.

Its subcellular location is the cytoplasm. It localises to the cytosol. The protein resides in the cell membrane. The protein localises to the mitochondrion. It catalyses the reaction a 1,2-diacyl-sn-glycero-3-phosphocholine + H2O = a 1-acyl-sn-glycero-3-phosphocholine + a fatty acid + H(+). The enzyme catalyses a 1-O-alkyl-2-acyl-sn-glycero-3-phosphocholine + H2O = a 1-O-alkyl-sn-glycero-3-phosphocholine + a fatty acid + H(+). The catalysed reaction is 1-hexadecanoyl-2-(9Z-octadecenoyl)-sn-glycero-3-phosphocholine + H2O = 2-(9Z-octadecenoyl)-sn-glycero-3-phosphocholine + hexadecanoate + H(+). It carries out the reaction 1-hexadecanoyl-2-(9Z,12Z-octadecadienoyl)-sn-glycero-3-phosphocholine + H2O = (9Z,12Z)-octadecadienoate + 1-hexadecanoyl-sn-glycero-3-phosphocholine + H(+). It catalyses the reaction 1-hexadecanoyl-2-(5Z,8Z,11Z,14Z-eicosatetraenoyl)-sn-glycero-3-phosphocholine + H2O = 1-hexadecanoyl-sn-glycero-3-phosphocholine + (5Z,8Z,11Z,14Z)-eicosatetraenoate + H(+). The enzyme catalyses 1-hexadecanoyl-2-(9Z,12Z-octadecadienoyl)-sn-glycero-3-phosphoethanolamine + H2O = 1-hexadecanoyl-sn-glycero-3-phosphoethanolamine + (9Z,12Z)-octadecadienoate + H(+). The catalysed reaction is 1-hexadecanoyl-2-(5Z,8Z,11Z,14Z-eicosatetraenoyl)-sn-glycero-3-phosphoethanolamine + H2O = 1-hexadecanoyl-sn-glycero-3-phosphoethanolamine + (5Z,8Z,11Z,14Z)-eicosatetraenoate + H(+). It carries out the reaction 1-(5Z,8Z,11Z,14Z-eicosatetraenoyl)-2-O-hexadecyl-sn-glycero-3-phosphocholine + H2O = 2-O-hexadecyl-sn-glycero-3-phosphocholine + (5Z,8Z,11Z,14Z)-eicosatetraenoate + H(+). It catalyses the reaction 1-O-hexadecyl-2-(5Z,8Z,11Z,14Z)-eicosatetraenoyl-sn-glycero-3-phosphocholine + H2O = 1-O-hexadecyl-sn-glycero-3-phosphocholine + (5Z,8Z,11Z,14Z)-eicosatetraenoate + H(+). The enzyme catalyses 1-hexadecanoyl-sn-glycero-3-phosphocholine + H2O = sn-glycerol 3-phosphocholine + hexadecanoate + H(+). Its activity is regulated as follows. Stimulated by cytosolic Ca(2+). In terms of biological role, has calcium-dependent phospholipase and lysophospholipase activities with a potential role in membrane lipid remodeling and biosynthesis of lipid mediators. Preferentially hydrolyzes the ester bond of the fatty acyl group attached at sn-2 position of phospholipids (phospholipase A2 activity). Selectively hydrolyzes sn-2 arachidonoyl group from membrane phospholipids, providing the precursor for eicosanoid biosynthesis. In myocardial mitochondria, plays a major role in arachidonate release that is metabolically channeled to the formation of cardioprotective eicosanoids, epoxyeicosatrienoates (EETs). The protein is Cytosolic phospholipase A2 zeta (Pla2g4f) of Mus musculus (Mouse).